Here is a 345-residue protein sequence, read N- to C-terminus: Biotin synthase (345 aa).

The Radical SAM core domain occupies 66–291 (PEVEVEGIIS…RTMLRFAGGR (226 aa)). [4Fe-4S] cluster is bound by residues cysteine 81, cysteine 85, and cysteine 88. Residues cysteine 124, cysteine 157, cysteine 216, and arginine 286 each coordinate [2Fe-2S] cluster.

It belongs to the radical SAM superfamily. Biotin synthase family. In terms of assembly, homodimer. The cofactor is [4Fe-4S] cluster. It depends on [2Fe-2S] cluster as a cofactor.

The catalysed reaction is (4R,5S)-dethiobiotin + (sulfur carrier)-SH + 2 reduced [2Fe-2S]-[ferredoxin] + 2 S-adenosyl-L-methionine = (sulfur carrier)-H + biotin + 2 5'-deoxyadenosine + 2 L-methionine + 2 oxidized [2Fe-2S]-[ferredoxin]. The protein operates within cofactor biosynthesis; biotin biosynthesis; biotin from 7,8-diaminononanoate: step 2/2. Its function is as follows. Catalyzes the conversion of dethiobiotin (DTB) to biotin by the insertion of a sulfur atom into dethiobiotin via a radical-based mechanism. This chain is Biotin synthase, found in Mycobacterium avium (strain 104).